The sequence spans 511 residues: E3 ubiquitin-protein ligase TRIM7 (511 aa).

The RING-type zinc-finger motif lies at 29–82; that stretch reads CSICLELFREPVSVECGHSFCRACIGRCWERPGAGSVGAATRAPPFPLPCPQCR. Position 107 is a phosphoserine; by RPS6KA5 (S107). The segment at 125 to 166 adopts a B box-type zinc-finger fold; it reads AAAARCGQHGEPFKLYCQDDGRAICVVCDRAREHREHAVLPL. Positions 130, 133, 152, and 158 each coordinate Zn(2+). A coiled-coil region spans residues 166 to 263; the sequence is LDEAVQEAKE…AQLGVEITQL (98 aa). The B30.2/SPRY domain maps to 324 to 511; the sequence is MLKKFKEDLR…STGTYLRIWP (188 aa).

It belongs to the TRIM/RBCC family. As to quaternary structure, forms homodimers. Interacts with GNIP2. Interacts with GYG1. Interacts with RNF187 (via C-terminus). In terms of processing, phosphorylated at Ser-107 by RPS6KA5/MSK1, which stimulates the ubiquitin ligase activity. Auto-ubiquitinates via 'Lys-63'-linked polyubiquitination. In terms of tissue distribution, skeletal muscle and placenta, at lower levels in heart, brain and pancreas. Isoform 1 is widely expressed with high level in testis, kidney and heart.

It is found in the nucleus. The protein resides in the cytoplasm. The protein localises to the golgi apparatus. It catalyses the reaction S-ubiquitinyl-[E2 ubiquitin-conjugating enzyme]-L-cysteine + [acceptor protein]-L-lysine = [E2 ubiquitin-conjugating enzyme]-L-cysteine + N(6)-ubiquitinyl-[acceptor protein]-L-lysine.. It participates in protein modification; protein ubiquitination. E3 ubiquitin-protein ligase that have both tumor-promoting and tumor-suppressing activities and functions in several biological processes including innate immunity, regulation of ferroptosis as well as cell proliferation and migration. Acts as an antiviral effector against multiple viruses by targeting specific viral proteins for ubiquitination and degradation including norovirus NTPase protein or SARS-CoV-2 NSP5 and NSP8 proteins. Mechanistically, recognizes the C-terminal glutamine-containing motif usually generated by viral proteases that process the polyproteins and trigger their ubiquitination and subsequent degradation. Mediates 'Lys-63'-linked polyubiquitination and stabilization of the JUN coactivator RNF187 in response to growth factor signaling via the MEK/ERK pathway, thereby regulating JUN transactivation and cellular proliferation. Promotes the TLR4-mediated signaling activation through its E3 ligase domain leading to production of pro-inflammatory cytokines and type I interferon. Also plays a negative role in the regulation of exogenous cytosolic DNA virus-triggered immune response. Mechanistically, enhances the 'Lys-48'-linked ubiquitination of STING1 leading to its proteasome-dependent degradation. Mediates the ubiquitination of the SIN3-HDAC chromatin remodeling complex component BRMS1. Modulates NCOA4-mediated ferritinophagy and ferroptosis in glioblastoma cells by ubiquitinating NCOA4, leading to its degradation. In terms of biological role, (Microbial infection) Promotes Zika virus replication by mediating envelope protein E ubiquitination. The protein is E3 ubiquitin-protein ligase TRIM7 (TRIM7) of Homo sapiens (Human).